A 145-amino-acid polypeptide reads, in one-letter code: 3-hydroxyacyl-[acyl-carrier-protein] dehydratase FabZ (145 aa).

Residue His51 is part of the active site.

This sequence belongs to the thioester dehydratase family. FabZ subfamily.

It localises to the cytoplasm. The enzyme catalyses a (3R)-hydroxyacyl-[ACP] = a (2E)-enoyl-[ACP] + H2O. Its function is as follows. Involved in unsaturated fatty acids biosynthesis. Catalyzes the dehydration of short chain beta-hydroxyacyl-ACPs and long chain saturated and unsaturated beta-hydroxyacyl-ACPs. This is 3-hydroxyacyl-[acyl-carrier-protein] dehydratase FabZ from Staphylococcus haemolyticus (strain JCSC1435).